The primary structure comprises 261 residues: Cytosolic Fe-S cluster assembly factor Nubp2 homolog (261 aa).

Position 14–21 (14–21) interacts with ATP; that stretch reads GKGGVGKS. [4Fe-4S] cluster-binding residues include cysteine 188 and cysteine 191.

The protein belongs to the Mrp/NBP35 ATP-binding proteins family. NUBP2/CFD1 subfamily. In terms of assembly, heterotetramer of 2 Nubp1 and 2 Nubp2 chains. It depends on [4Fe-4S] cluster as a cofactor.

It is found in the cytoplasm. Functionally, component of the cytosolic iron-sulfur (Fe/S) protein assembly (CIA) machinery. Required for maturation of extramitochondrial Fe-S proteins. The Nubp1-Nubp2 heterotetramer forms a Fe-S scaffold complex, mediating the de novo assembly of an Fe-S cluster and its transfer to target apoproteins. This chain is Cytosolic Fe-S cluster assembly factor Nubp2 homolog, found in Drosophila ananassae (Fruit fly).